Reading from the N-terminus, the 194-residue chain is Probable GTP-binding protein EngB (194 aa).

The region spanning 22–194 (DLPEYALAGR…AWQFIKEGME (173 aa)) is the EngB-type G domain. GTP-binding positions include 30–37 (GRSNVGKS), 57–61 (GKTQT), 75–78 (DVPG), 142–145 (TKAD), and 174–176 (FSS). Residues serine 37 and threonine 59 each coordinate Mg(2+).

This sequence belongs to the TRAFAC class TrmE-Era-EngA-EngB-Septin-like GTPase superfamily. EngB GTPase family. Mg(2+) serves as cofactor.

Its function is as follows. Necessary for normal cell division and for the maintenance of normal septation. In Listeria monocytogenes serotype 4b (strain CLIP80459), this protein is Probable GTP-binding protein EngB.